The following is a 300-amino-acid chain: Junctional adhesion molecule A (300 aa).

Positions 1 to 26 (MGTEGKAGSKLLFLFTSMILGSLVQG) are cleaved as a signal peptide. Residues 27–238 (KGSVYSPQTA…MEAVELNVGG (212 aa)) lie on the Extracellular side of the membrane. 2 Ig-like V-type domains span residues 28–122 (GSVY…GEVS) and 134–228 (PTVS…EAVR). Cystine bridges form between cysteine 49–cysteine 108 and cysteine 152–cysteine 212. Asparagine 185 is a glycosylation site (N-linked (GlcNAc...) asparagine). Residues 239 to 259 (IVAAVLVTLILLGLLIFGIWF) traverse the membrane as a helical segment. Residues 260-300 (AYSRGYFERTKKGTAPGKKVIYSQPSARSEGEFKQTSSFLV) are Cytoplasmic-facing. Serine 282, serine 285, and serine 288 each carry phosphoserine.

The protein belongs to the immunoglobulin superfamily. As to quaternary structure, interacts with the ninth PDZ domain of MPDZ. Interacts with the first PDZ domain of PARD3. The association between PARD3 and PARD6B probably disrupts this interaction. Interacts with ITGAL (via I-domain). Interacts with CD151. Post-translationally, N-glycosylated.

It is found in the cell junction. Its subcellular location is the tight junction. The protein localises to the cell membrane. Seems to play a role in epithelial tight junction formation. Appears early in primordial forms of cell junctions and recruits PARD3. The association of the PARD6-PARD3 complex may prevent the interaction of PARD3 with JAM1, thereby preventing tight junction assembly. Plays a role in regulating monocyte transmigration involved in integrity of epithelial barrier. Ligand for integrin alpha-L/beta-2 involved in memory T-cell and neutrophil transmigration. The protein is Junctional adhesion molecule A (F11r) of Rattus norvegicus (Rat).